The sequence spans 344 residues: Phosphate acyltransferase (344 aa).

Belongs to the PlsX family. In terms of assembly, homodimer. Probably interacts with PlsY.

It is found in the cytoplasm. It carries out the reaction a fatty acyl-[ACP] + phosphate = an acyl phosphate + holo-[ACP]. Its pathway is lipid metabolism; phospholipid metabolism. Functionally, catalyzes the reversible formation of acyl-phosphate (acyl-PO(4)) from acyl-[acyl-carrier-protein] (acyl-ACP). This enzyme utilizes acyl-ACP as fatty acyl donor, but not acyl-CoA. In Actinobacillus pleuropneumoniae serotype 5b (strain L20), this protein is Phosphate acyltransferase.